We begin with the raw amino-acid sequence, 525 residues long: Biotinidase (525 aa).

A signal peptide spans 1–26 (MSRAGRQLALLLCSCCVAVAIPGGLA). The CN hydrolase domain occupies 54-333 (DPLALTSREQ…PGLISAGNAT (280 aa)). Catalysis depends on Glu94, which acts as the Proton acceptor. N-linked (GlcNAc...) asparagine glycans are attached at residues Asn132 and Asn185. The active-site Proton donor is the Lys194. Cys227 functions as the Nucleophile in the catalytic mechanism. The N-linked (GlcNAc...) asparagine glycan is linked to Asn384.

It belongs to the carbon-nitrogen hydrolase superfamily. BTD/VNN family.

Its subcellular location is the secreted. The protein resides in the extracellular space. The enzyme catalyses biocytin + H2O = biotin + L-lysine. It carries out the reaction biotin amide + H2O = biotin + NH4(+). In terms of biological role, catalytic release of biotin from biocytin, the product of biotin-dependent carboxylases degradation. The sequence is that of Biotinidase (BTD) from Bos taurus (Bovine).